The primary structure comprises 235 residues: MCRLAKIISNAGVCSRRNAEKLIVGGKVKIDGITILSPATNVDMSNQIEVSGRLINNTQKPRLWIYYKPVGLITTHKDPLSRKTVFEQLIGLPRVISIGRLDLNSEGLLLLTNSGDLAHQFEMPASKLKRVYNVRAYGNPNILLKNNYKNLKIDGIFYNPHSIKLLRQNKSNSWFEVVLFEGKNREIRRIFEYFGLQVNKLIRIQYGALKIGNLKPGNYQEISNKILEKQLVMCF.

An S4 RNA-binding domain is found at 2–69; the sequence is CRLAKIISNA…KPRLWIYYKP (68 aa). The active-site Nucleophile is aspartate 102.

The protein belongs to the pseudouridine synthase RsuA family.

It catalyses the reaction a uridine in RNA = a pseudouridine in RNA. This is an uncharacterized protein from Rickettsia prowazekii (strain Madrid E).